The primary structure comprises 307 residues: Ribonuclease Z (307 aa).

Residues His-63, His-65, Asp-67, His-68, His-140, Asp-211, and His-269 each contribute to the Zn(2+) site. Asp-67 functions as the Proton acceptor in the catalytic mechanism.

This sequence belongs to the RNase Z family. In terms of assembly, homodimer. Requires Zn(2+) as cofactor.

It carries out the reaction Endonucleolytic cleavage of RNA, removing extra 3' nucleotides from tRNA precursor, generating 3' termini of tRNAs. A 3'-hydroxy group is left at the tRNA terminus and a 5'-phosphoryl group is left at the trailer molecule.. Its function is as follows. Zinc phosphodiesterase, which displays some tRNA 3'-processing endonuclease activity. Probably involved in tRNA maturation, by removing a 3'-trailer from precursor tRNA. The chain is Ribonuclease Z from Geobacillus kaustophilus (strain HTA426).